A 198-amino-acid chain; its full sequence is Vacuolar iron transporter homolog 4 (198 aa).

Residues 1–32 (MESNNNNLNLDMEKDQETTFDYSKRAQWLRAA) lie on the Cytoplasmic side of the membrane. Residues 33–53 (VLGANDGLVSTASLMMGIGAV) traverse the membrane as a helical segment. Topologically, residues 54–60 (KQDVRIM) are vacuolar. The helical transmembrane segment at 61 to 81 (LLTGFAGLVAGACSMAIGEFI) threads the bilayer. The Cytoplasmic segment spans residues 82–114 (SVYSQYDIEVAQMKRESGGETKKEKLPSPTQAA). A helical membrane pass occupies residues 115–135 (IASALAFTLGAIVPLLAAAFV). Residues 136–141 (KEYKVR) are Vacuolar-facing. Residues 142–162 (IGVIVAAVTLALVMFGWLGAV) traverse the membrane as a helical segment. The Cytoplasmic segment spans residues 163–174 (LGKAPVVKSLVR). A helical transmembrane segment spans residues 175 to 195 (VLIGGWLAMAITFGFTKLVGS). Over 196–198 (HGL) the chain is Vacuolar.

This sequence belongs to the CCC1 family.

It is found in the vacuole membrane. It carries out the reaction Fe(2+)(in) = Fe(2+)(out). In terms of biological role, probable vacuolar iron transporter that may be involved in the regulation of iron distribution throughout the plant. This chain is Vacuolar iron transporter homolog 4, found in Arabidopsis thaliana (Mouse-ear cress).